The chain runs to 517 residues: Crotonobetaine/carnitine--CoA ligase (517 aa).

The protein belongs to the ATP-dependent AMP-binding enzyme family.

It catalyses the reaction 4-(trimethylamino)butanoate + ATP + CoA = 4-(trimethylamino)butanoyl-CoA + AMP + diphosphate. It carries out the reaction crotonobetaine + ATP + CoA = crotonobetainyl-CoA + AMP + diphosphate. The enzyme catalyses (R)-carnitine + ATP + CoA = (R)-carnitinyl-CoA + AMP + diphosphate. It functions in the pathway amine and polyamine metabolism; carnitine metabolism. In terms of biological role, catalyzes the transfer of CoA to carnitine, generating the initial carnitinyl-CoA needed for the CaiB reaction cycle. Also has activity toward crotonobetaine and gamma-butyrobetaine. This Escherichia coli O45:K1 (strain S88 / ExPEC) protein is Crotonobetaine/carnitine--CoA ligase.